Reading from the N-terminus, the 482-residue chain is Signal recognition particle protein (482 aa).

GTP-binding positions include 107 to 114 (GLQGTGKT), 189 to 193 (DTAGR), and 247 to 250 (TKLD). 2 disordered regions span residues 380–413 (MTTE…TDVS) and 452–482 (FGGQ…FGQL). The span at 452-468 (FGGQPGPGFRGYRGGGG) shows a compositional bias: gly residues. Basic residues predominate over residues 469 to 482 (KPKKKKKKKGFGQL).

This sequence belongs to the GTP-binding SRP family. SRP54 subfamily. As to quaternary structure, part of the signal recognition particle protein translocation system, which is composed of SRP and FtsY.

The protein resides in the cytoplasm. The enzyme catalyses GTP + H2O = GDP + phosphate + H(+). In terms of biological role, involved in targeting and insertion of nascent membrane proteins into the cytoplasmic membrane. Binds to the hydrophobic signal sequence of the ribosome-nascent chain (RNC) as it emerges from the ribosomes. The SRP-RNC complex is then targeted to the cytoplasmic membrane where it interacts with the SRP receptor FtsY. The protein is Signal recognition particle protein of Synechocystis sp. (strain ATCC 27184 / PCC 6803 / Kazusa).